Here is a 723-residue protein sequence, read N- to C-terminus: Threonine--tRNA ligase 1, cytoplasmic (723 aa).

A compositionally biased stretch (polar residues) spans 1–10 (MSEEQASSPS). Residues 1–49 (MSEEQASSPSAKMGDEEKPVGAGEEKQKEGSKKKNKEGSGDGGRAELNP) are disordered. Positions 13–39 (MGDEEKPVGAGEEKQKEGSKKKNKEGS) are enriched in basic and acidic residues. The residue at position 39 (Ser39) is a Phosphoserine. The TGS domain maps to 79-143 (DSKPIKVTLP…EEDCTLELLK (65 aa)). N6-acetyllysine is present on Lys243. Residue Thr246 is modified to Phosphothreonine. Residue Tyr298 is modified to Phosphotyrosine. Thr453 is modified (phosphothreonine). Residue Ser702 is modified to Phosphoserine.

This sequence belongs to the class-II aminoacyl-tRNA synthetase family. In terms of assembly, homodimer. In terms of processing, ISGylated.

It localises to the cytoplasm. The catalysed reaction is tRNA(Thr) + L-threonine + ATP = L-threonyl-tRNA(Thr) + AMP + diphosphate + H(+). In terms of biological role, catalyzes the attachment of threonine to tRNA(Thr) in a two-step reaction: threonine is first activated by ATP to form Thr-AMP and then transferred to the acceptor end of tRNA(Thr). Also edits incorrectly charged tRNA(Thr) via its editing domain, at the post-transfer stage. The chain is Threonine--tRNA ligase 1, cytoplasmic (TARS1) from Bos taurus (Bovine).